A 220-amino-acid polypeptide reads, in one-letter code: GILT-like protein CBG03282 (220 aa).

Positions 1-22 (MTIIRTLFVYYSFLFILVLCSS) are cleaved as a signal peptide. The N-linked (GlcNAc...) asparagine glycan is linked to Asn131.

It belongs to the GILT family.

It is found in the secreted. The chain is GILT-like protein CBG03282 from Caenorhabditis briggsae.